Reading from the N-terminus, the 372-residue chain is Queuine tRNA-ribosyltransferase (372 aa).

Asp-92 serves as the catalytic Proton acceptor. Substrate contacts are provided by residues 92 to 96, Asp-146, Gln-188, and Gly-215; that span reads DSGGF. Residues 246 to 252 are RNA binding; that stretch reads GIGTLRE. Asp-265 (nucleophile) is an active-site residue. Residues 270–274 form an RNA binding; important for wobble base 34 recognition region; it reads TRLGR. Zn(2+) is bound by residues Cys-303, Cys-305, Cys-308, and His-334.

The protein belongs to the queuine tRNA-ribosyltransferase family. In terms of assembly, homodimer. Within each dimer, one monomer is responsible for RNA recognition and catalysis, while the other monomer binds to the replacement base PreQ1. Zn(2+) serves as cofactor.

It carries out the reaction 7-aminomethyl-7-carbaguanine + guanosine(34) in tRNA = 7-aminomethyl-7-carbaguanosine(34) in tRNA + guanine. The protein operates within tRNA modification; tRNA-queuosine biosynthesis. Functionally, catalyzes the base-exchange of a guanine (G) residue with the queuine precursor 7-aminomethyl-7-deazaguanine (PreQ1) at position 34 (anticodon wobble position) in tRNAs with GU(N) anticodons (tRNA-Asp, -Asn, -His and -Tyr). Catalysis occurs through a double-displacement mechanism. The nucleophile active site attacks the C1' of nucleotide 34 to detach the guanine base from the RNA, forming a covalent enzyme-RNA intermediate. The proton acceptor active site deprotonates the incoming PreQ1, allowing a nucleophilic attack on the C1' of the ribose to form the product. After dissociation, two additional enzymatic reactions on the tRNA convert PreQ1 to queuine (Q), resulting in the hypermodified nucleoside queuosine (7-(((4,5-cis-dihydroxy-2-cyclopenten-1-yl)amino)methyl)-7-deazaguanosine). The sequence is that of Queuine tRNA-ribosyltransferase from Prochlorococcus marinus (strain MIT 9303).